We begin with the raw amino-acid sequence, 157 residues long: Jacalin-related lectin 15 (157 aa).

Positions 13–152 constitute a Jacalin-type lectin domain; the sequence is ADKLEAKGGN…LTSLGAYFAP (140 aa).

It belongs to the jacalin lectin family. In terms of tissue distribution, expressed in stems, leaves and flowers. Not detected in roots.

Its function is as follows. Confers broad resistance to potexviruses. Inhibits virus accumulation at the cellular level. In Arabidopsis thaliana (Mouse-ear cress), this protein is Jacalin-related lectin 15 (JAL15).